Here is a 1409-residue protein sequence, read N- to C-terminus: MDKAKRNIKPFDGEKYAIWKFRIRALLAEQDVLKVVDGLMPNEVDDSWKKAERCAKSTIIEYLSDSFLNFATSDITARQILENLDAVYERKSLASQLALRKRLLSLKLSSEMSLLSHFHIFDELISELLAAGAKIEEMDKISHLLITLPSCYDGIITAIETLSEENLTLAFVKNRLLDQEIKIKNDHNDTSKKVMNAIVHNNNNTYKNNLFKNRVTKPKKIFKGNSKYKVKCHHCGREGHIKKDCFHYKRILNNKNKENEKQVQTATSHGIAFMVKEVNNTSVMDNCGFVLDSGASDHLINDESLYTDSVEVVPPLKIAVAKQGEFIYATKRGIVRLRNDHEITLEDVLFCKEAAGNLMSVKRLQEAGMSIEFDKSGVTISKNGLMVVKNSGMLNNVPVINFQAYSINAKHKNNFRLWHERFGHISDGKLLEIKRKNMFSDQSLLNNLELSCEICEPCLNGKQARLPFKQLKDKTHIKRPLFVVHSDVCGPITPVTLDDKNYFVIFVDQFTHYCVTYLIKYKSDVFSMFQDFVAKSEAHFNLKVVYLYIDNGREYLSNEMRQFCVKKGISYHLTVPHTPQLNGVSERMIRTITEKARTMVSGAKLDKSFWGEAVLTATYLINRIPSRALVDSSKTPYEMWHNKKPYLKHLRVFGATVYVHIKNKQGKFDDKSFKSIFVGYEPNGFKLWDAVNEKFIVARDVVVDETNMVNSRAVKFETVFLKDSKESENKNFPNDSRKIIQTEFPNESKECDNIQFLKDSKESENKNFPNDSRKIIQTEFPNESKECDNIQFLKDSKESNKYFLNESKKRKRDDHLNESKGSGNPNESRESETAEHLKEIGIDNPTKNDGIEIINRRSERLKTKPQISYNEEDNSLNKVVLNAHTIFNDVPNSFDEIQYRDDKSSWEEAINTELNAHKINNTWTITKRPENKNIVDSRWVFSVKYNELGNPIRYKARLVARGFTQKYQIDYEETFAPVARISSFRFILSLVIQYNLKVHQMDVKTAFLNGTLKEEIYMRLPQGISCNSDNVCKLNKAIYGLKQAARCWFEVFEQALKECEFVNSSVDRCIYILDKGNINENIYVLLYVDDVVIATGDMTRMNNFKRYLMEKFRMTDLNEIKHFIGIRIEMQEDKIYLSQSAYVKKILSKFNMENCNAVSTPLPSKINYELLNSDEDCNTPCRSLIGCLMYIMLCTRPDLTTAVNILSRYSSKNNSELWQNLKRVLRYLKGTIDMKLIFKKNLAFENKIIGYVDSDWAGSEIDRKSTTGYLFKMFDFNLICWNTKRQNSVAASSTEAEYMALFEAVREALWLKFLLTSINIKLENPIKIYEDNQGCISIANNPSCHKRAKHIDIKYHFAREQVQNNVICLEYIPTENQLADIFTKPLPAARFVELRDKLGLLQDDQSNAE.

A CCHC-type zinc finger spans residues 230–247 (VKCHHCGREGHIKKDCFH). Aspartate 292 acts as the For protease activity in catalysis. Residues 476–644 (HIKRPLFVVH…TPYEMWHNKK (169 aa)) form the Integrase catalytic domain. Disordered stretches follow at residues 760–780 (SKESENKNFPNDSRKIIQTEF) and 805–851 (NESK…NDGI). Basic and acidic residues predominate over residues 827-841 (ESRESETAEHLKEIG).

This Drosophila melanogaster (Fruit fly) protein is Copia protein (GIP).